Consider the following 220-residue polypeptide: Sericin-2 (220 aa).

Low complexity-rich tracts occupy residues 1–131 and 141–155; these read SSST…ASSS and NESS…QNSA. Residues 1–220 are disordered; the sequence is SSSTNNSSGS…SSSSSSWSSA (220 aa). Positions 156–165 are enriched in polar residues; that stretch reads TRSQVINADG. Over residues 166–220 the composition is skewed to low complexity; it reads SQSSSSSSSSASNQASATSSSSVSADGSESESSSSSSSSSSSSSESSSSSSWSSA.

As to expression, produced exclusively in the middle (MSG) section of silk glands.

The protein resides in the secreted. In terms of biological role, provides the silk fibroin thread with a sticky coating. Acts as a cement by sticking silk threads together. In Galleria mellonella (Greater wax moth), this protein is Sericin-2 (SER2).